Reading from the N-terminus, the 153-residue chain is ORM1-like protein 3 (153 aa).

Over 1 to 21 the chain is Cytoplasmic; sequence MNVGTAHSEVNPNTRVMNSRG. A run of 2 helical transmembrane segments spans residues 22–42 and 43–63; these read IWLS…SIPF and VSVP…MYIF. Residues 64–94 lie on the Cytoplasmic side of the membrane; sequence LHTVKGTPFETPDQGKARLLTHWEQMDYGVQ. The chain crosses the membrane as a helical span at residues 95–117; that stretch reads FTASRKFLTITPIILYFLTSFYT. Residues 118 to 121 lie on the Extracellular side of the membrane; the sequence is KYDR. The helical transmembrane segment at 122–142 threads the bilayer; sequence VHFVINTISLLTVLIPKLPQF. Pro137 carries the hydroxyproline modification. Residues 143–153 lie on the Cytoplasmic side of the membrane; that stretch reads HGVRLFGINKY.

The protein belongs to the ORM family. In terms of assembly, ceramide-sensitive subunit of the serine palmitoyltransferase (SPT) complex, which is also composed of SPTLC1, SPTLC2/3 and SPTSSA/B. When hydroxylated at Pro-137, ubiquitinated via 'Lys-48'-linkage, leading to proteasomal degradation. In endothelial cells, ORMDL3 proteasomal degradation is controlled by the sphingosine 1-phosphate receptor signaling pathway.

It localises to the endoplasmic reticulum membrane. Its function is as follows. Plays an essential role in the homeostatic regulation of sphingolipid de novo biosynthesis by modulating the activity of the serine palmitoyltransferase (SPT) in response to ceramide levels. When complexed to SPT, the binding of ceramides to its N-terminus stabilizes a conformation that block SPT substrate entry, hence preventing SPT catalytic activity. Through this mechanism, maintains ceramide levels at sufficient concentrations for the production of complex sphingolipids, but which prevents the accumulation of ceramides to levels that trigger apoptosis. This Danio rerio (Zebrafish) protein is ORM1-like protein 3 (ormdl3).